A 108-amino-acid chain; its full sequence is MALWTRLLPLLALLALWAPAPAQAFVNQHLCGSHLVEALYLVCGERGFFYTPKARREAENPQAGAVELGGGLGGLQALALEGPPQKRGIVEQCCTSICSLYQLENYCN.

The first 24 residues, 1–24, serve as a signal peptide directing secretion; that stretch reads MALWTRLLPLLALLALWAPAPAQA. Disulfide bonds link Cys31–Cys94, Cys43–Cys107, and Cys93–Cys98. Positions 57–85 are cleaved as a propeptide — c peptide; it reads EAENPQAGAVELGGGLGGLQALALEGPPQ.

This sequence belongs to the insulin family. As to quaternary structure, heterodimer of a B chain and an A chain linked by two disulfide bonds.

It localises to the secreted. In terms of biological role, insulin decreases blood glucose concentration. It increases cell permeability to monosaccharides, amino acids and fatty acids. It accelerates glycolysis, the pentose phosphate cycle, and glycogen synthesis in liver. The sequence is that of Insulin (INS) from Sus scrofa (Pig).